Reading from the N-terminus, the 644-residue chain is MFQDNPLLAQLKQQLHSQTPRVEGVVKGTEKGFGFLEVDGQKSYFIPPPYMKKVMHGDRVSATLHTEKEREIAEPETLIEPFLSRFVGRVQKRDDRLSIVPDHPLLKDAIQCRPVRGLNHNFQAGDWAVAEMCRHPLKGDRGFNADLTQFITDGEDHLAPWWVTLARHNLEKEAPEMIAISEPDASLPREDLTALNFVTIDSASTEDMDDALFVQDNGDGSLQLTIAIADPTAYVEQGSPLDEIARKRAFTNYLPGFNIPMLPRDLSDNLCSLRPNQRRPVLACRVTIGADGALADDIRFFAAEIESKAKLVYDEVSDWLEGIAGWQPPSDDIAQQITLLKRVCDVRNSWRHQHALVFKDRPDYRFVLGEKGEVLEIVTEQRRTANRIVEECMIASNVCAAIVLRDRLGFGIYNVHTGFDPLLVEQAVTVLQANGVEADAEKLLTLDGFCELRRHLDSQPTQFLDSRIRRSQTYAEISTTPGPHYGLGLEAYATWTSPIRKYGDMVNHRLLKAIIAEQPAEKPQDEVTVQLAERRRLNRMAERDVGDWLYARYLKDKAGTDERFNAEIIDVTRGGLRVRLLDNGAVAFIPAPFIHAVRDEMVCSQETGTVQIKGEVVYRQGDNLQVTIAEVRMETRSVIARPAA.

The 328-residue stretch at Arg189 to Ala516 folds into the RNB domain. Positions Asp561 to Ala643 constitute an S1 motif domain.

It belongs to the RNR ribonuclease family. RNase II subfamily.

It is found in the cytoplasm. The catalysed reaction is Exonucleolytic cleavage in the 3'- to 5'-direction to yield nucleoside 5'-phosphates.. In terms of biological role, involved in mRNA degradation. Hydrolyzes single-stranded polyribonucleotides processively in the 3' to 5' direction. The protein is Exoribonuclease 2 of Serratia proteamaculans (strain 568).